We begin with the raw amino-acid sequence, 301 residues long: GTPase Era (301 aa).

One can recognise an Era-type G domain in the interval 7-175 (YCGFIAIVGR…AGIVRKHLPE (169 aa)). The interval 15-22 (GRPNVGKS) is G1. 15-22 (GRPNVGKS) is a GTP binding site. The segment at 41 to 45 (QTTRH) is G2. Residues 62–65 (DTPG) form a G3 region. GTP-binding positions include 62–66 (DTPGL) and 124–127 (NKVD). The tract at residues 124–127 (NKVD) is G4. The tract at residues 154–156 (ISA) is G5. The KH type-2 domain maps to 206 to 283 (LGAELPYSVT…HLELWVKVKS (78 aa)).

It belongs to the TRAFAC class TrmE-Era-EngA-EngB-Septin-like GTPase superfamily. Era GTPase family. In terms of assembly, monomer.

It localises to the cytoplasm. The protein localises to the cell inner membrane. In terms of biological role, an essential GTPase that binds both GDP and GTP, with rapid nucleotide exchange. Plays a role in 16S rRNA processing and 30S ribosomal subunit biogenesis and possibly also in cell cycle regulation and energy metabolism. This is GTPase Era from Salmonella paratyphi B (strain ATCC BAA-1250 / SPB7).